A 179-amino-acid polypeptide reads, in one-letter code: Large ribosomal subunit protein uL6 (179 aa).

Belongs to the universal ribosomal protein uL6 family. Part of the 50S ribosomal subunit.

This protein binds to the 23S rRNA, and is important in its secondary structure. It is located near the subunit interface in the base of the L7/L12 stalk, and near the tRNA binding site of the peptidyltransferase center. The sequence is that of Large ribosomal subunit protein uL6 from Spiroplasma citri.